Consider the following 348-residue polypeptide: Dihydroorotase (348 aa).

Zn(2+)-binding residues include His-17 and His-19. Substrate contacts are provided by residues 19 to 21 and Asn-45; that span reads HLR. Zn(2+) contacts are provided by Lys-103, His-140, and His-178. Lys-103 is modified (N6-carboxylysine). Position 140 (His-140) interacts with substrate. A substrate-binding site is contributed by Leu-223. Asp-251 contributes to the Zn(2+) binding site. Asp-251 is a catalytic residue. The substrate site is built by His-255 and Ala-267.

It belongs to the metallo-dependent hydrolases superfamily. DHOase family. Class II DHOase subfamily. Homodimer. The cofactor is Zn(2+).

The catalysed reaction is (S)-dihydroorotate + H2O = N-carbamoyl-L-aspartate + H(+). The protein operates within pyrimidine metabolism; UMP biosynthesis via de novo pathway; (S)-dihydroorotate from bicarbonate: step 3/3. In terms of biological role, catalyzes the reversible cyclization of carbamoyl aspartate to dihydroorotate. The sequence is that of Dihydroorotase from Salmonella paratyphi A (strain ATCC 9150 / SARB42).